The primary structure comprises 362 residues: 3-dehydroquinate synthase (362 aa).

Residues serine 72–lysine 77, glycine 106–aspartate 110, threonine 130–threonine 131, lysine 142, and lysine 151 contribute to the NAD(+) site. Residues glutamate 184, histidine 246, and histidine 263 each coordinate Zn(2+).

It belongs to the sugar phosphate cyclases superfamily. Dehydroquinate synthase family. The cofactor is NAD(+). It depends on Co(2+) as a cofactor. Zn(2+) is required as a cofactor.

The protein resides in the cytoplasm. The enzyme catalyses 7-phospho-2-dehydro-3-deoxy-D-arabino-heptonate = 3-dehydroquinate + phosphate. Its pathway is metabolic intermediate biosynthesis; chorismate biosynthesis; chorismate from D-erythrose 4-phosphate and phosphoenolpyruvate: step 2/7. Its function is as follows. Catalyzes the conversion of 3-deoxy-D-arabino-heptulosonate 7-phosphate (DAHP) to dehydroquinate (DHQ). This is 3-dehydroquinate synthase from Bacillus subtilis (strain 168).